Reading from the N-terminus, the 344-residue chain is MFDFLPSSLQVTLPILFKIVAIVLPLILIVAWLTFAERKIIGYMQGRIGPNRVGPRGWLQPIADTVKLLLKEIIIPASANRILFLLAPVLAIAPALAVWAVIPFDAHLVLADINAALLYILAIGSMSVYGIILAGWASNSKYAFLGAMRSAAQVVSYEIAMGFALVGVLIAGGSLNLGEIVQAQEGGFWHWFWLPLFPLFLIYFISGVAETNRLPFDVAEGESEIVAGFHVEYSGMAFALFFLAEYIEMILVSTLAALMFLGGWLSPFQGTVLEAIFEWVPGIVWLLIKTAIFLFFYLWFRATFPRYRYDQIMRLGWKVFIPITIVWLLVVGGARVAQLGPWFT.

Helical transmembrane passes span 13-33 (LPIL…VAWL), 82-102 (ILFL…WAVI), 116-136 (ALLY…LAGW), 161-181 (MGFA…GEIV), 188-208 (FWHW…ISGV), 240-260 (LFFL…ALMF), 280-300 (VPGI…YLWF), and 319-339 (VFIP…VAQL).

It belongs to the complex I subunit 1 family. NDH-1 is composed of 14 different subunits. Subunits NuoA, H, J, K, L, M, N constitute the membrane sector of the complex.

It localises to the cell inner membrane. The catalysed reaction is a quinone + NADH + 5 H(+)(in) = a quinol + NAD(+) + 4 H(+)(out). NDH-1 shuttles electrons from NADH, via FMN and iron-sulfur (Fe-S) centers, to quinones in the respiratory chain. The immediate electron acceptor for the enzyme in this species is believed to be ubiquinone. Couples the redox reaction to proton translocation (for every two electrons transferred, four hydrogen ions are translocated across the cytoplasmic membrane), and thus conserves the redox energy in a proton gradient. This subunit may bind ubiquinone. The sequence is that of NADH-quinone oxidoreductase subunit H 2 from Nitrosococcus oceani (strain ATCC 19707 / BCRC 17464 / JCM 30415 / NCIMB 11848 / C-107).